Consider the following 517-residue polypeptide: Apolipoprotein N-acyltransferase (517 aa).

7 consecutive transmembrane segments (helical) span residues serine 5–threonine 25, phenylalanine 26–leucine 46, glycine 55–valine 75, phenylalanine 90–phenylalanine 110, valine 128–tryptophan 148, alanine 162–valine 182, and leucine 193–valine 213. In terms of domain architecture, CN hydrolase spans isoleucine 225–proline 471. Residue glutamate 264 is the Proton acceptor of the active site. Lysine 330 is a catalytic residue. The Nucleophile role is filled by cysteine 382.

The protein belongs to the CN hydrolase family. Apolipoprotein N-acyltransferase subfamily.

It localises to the cell inner membrane. The catalysed reaction is N-terminal S-1,2-diacyl-sn-glyceryl-L-cysteinyl-[lipoprotein] + a glycerophospholipid = N-acyl-S-1,2-diacyl-sn-glyceryl-L-cysteinyl-[lipoprotein] + a 2-acyl-sn-glycero-3-phospholipid + H(+). It participates in protein modification; lipoprotein biosynthesis (N-acyl transfer). Catalyzes the phospholipid dependent N-acylation of the N-terminal cysteine of apolipoprotein, the last step in lipoprotein maturation. This is Apolipoprotein N-acyltransferase from Photobacterium profundum (strain SS9).